A 252-amino-acid chain; its full sequence is Ribosomal RNA small subunit methyltransferase J (252 aa).

Residues 101-102 (RD), 117-118 (ER), 153-154 (SS), and aspartate 171 contribute to the S-adenosyl-L-methionine site.

Belongs to the methyltransferase superfamily. RsmJ family.

The protein localises to the cytoplasm. The catalysed reaction is guanosine(1516) in 16S rRNA + S-adenosyl-L-methionine = N(2)-methylguanosine(1516) in 16S rRNA + S-adenosyl-L-homocysteine + H(+). Its function is as follows. Specifically methylates the guanosine in position 1516 of 16S rRNA. This is Ribosomal RNA small subunit methyltransferase J from Citrobacter koseri (strain ATCC BAA-895 / CDC 4225-83 / SGSC4696).